Reading from the N-terminus, the 469-residue chain is Glutamine synthetase (469 aa).

The 85-residue stretch at 13–97 folds into the GS beta-grasp domain; it reads KEVRYVDLRF…LRCDIVEPAT (85 aa). A GS catalytic domain is found at 105-469; the sequence is PRSIAKRAEA…PVEFDMYYSL (365 aa). Positions 130 and 132 each coordinate Mg(2+). ATP is bound at residue glutamate 208. Mg(2+)-binding residues include glutamate 213 and glutamate 221. L-glutamate contacts are provided by residues 265-266 and glycine 266; that span reads NG. Histidine 270 serves as a coordination point for Mg(2+). ATP contacts are provided by residues 272 to 274 and serine 274; that span reads HQS. Arginine 322, glutamate 328, and arginine 340 together coordinate L-glutamate. Residues arginine 340, arginine 345, and lysine 353 each contribute to the ATP site. Position 358 (glutamate 358) interacts with Mg(2+). Residue arginine 360 coordinates L-glutamate. Tyrosine 398 carries the post-translational modification O-AMP-tyrosine.

Belongs to the glutamine synthetase family. In terms of assembly, oligomer of 12 subunits arranged in the form of two hexameric ring. Requires Mg(2+) as cofactor.

The protein localises to the cytoplasm. It catalyses the reaction L-glutamate + NH4(+) + ATP = L-glutamine + ADP + phosphate + H(+). With respect to regulation, the activity of this enzyme could be controlled by adenylation under conditions of abundant glutamine. Its function is as follows. Catalyzes the ATP-dependent biosynthesis of glutamine from glutamate and ammonia. The polypeptide is Glutamine synthetase (Methylococcus capsulatus (strain ATCC 33009 / NCIMB 11132 / Bath)).